Consider the following 542-residue polypeptide: CTP synthase (542 aa).

Residues 1–265 (MARYVFITGG…DSEVLSAFGM (265 aa)) form an amidoligase domain region. Residue S13 coordinates CTP. S13 serves as a coordination point for UTP. 14–19 (SLGKGI) provides a ligand contact to ATP. Residue Y54 coordinates L-glutamine. Residue D71 coordinates ATP. Residues D71 and E139 each contribute to the Mg(2+) site. CTP contacts are provided by residues 146-148 (DIE), 186-191 (KTKPTQ), and K222. Residues 186–191 (KTKPTQ) and K222 each bind UTP. The Glutamine amidotransferase type-1 domain occupies 291 to 541 (TIAVVGKYTG…IEATVEQSRL (251 aa)). Position 353 (A353) interacts with L-glutamine. C380 acts as the Nucleophile; for glutamine hydrolysis in catalysis. Residues 381-384 (FGMQ), E404, and R469 contribute to the L-glutamine site. Catalysis depends on residues H514 and E516.

Belongs to the CTP synthase family. In terms of assembly, homotetramer.

It carries out the reaction UTP + L-glutamine + ATP + H2O = CTP + L-glutamate + ADP + phosphate + 2 H(+). It catalyses the reaction L-glutamine + H2O = L-glutamate + NH4(+). The enzyme catalyses UTP + NH4(+) + ATP = CTP + ADP + phosphate + 2 H(+). Its pathway is pyrimidine metabolism; CTP biosynthesis via de novo pathway; CTP from UDP: step 2/2. Allosterically activated by GTP, when glutamine is the substrate; GTP has no effect on the reaction when ammonia is the substrate. The allosteric effector GTP functions by stabilizing the protein conformation that binds the tetrahedral intermediate(s) formed during glutamine hydrolysis. Inhibited by the product CTP, via allosteric rather than competitive inhibition. Its function is as follows. Catalyzes the ATP-dependent amination of UTP to CTP with either L-glutamine or ammonia as the source of nitrogen. Regulates intracellular CTP levels through interactions with the four ribonucleotide triphosphates. This Bartonella henselae (strain ATCC 49882 / DSM 28221 / CCUG 30454 / Houston 1) (Rochalimaea henselae) protein is CTP synthase.